Here is a 427-residue protein sequence, read N- to C-terminus: Tryptophan synthase beta chain 1 (427 aa).

Lysine 107 carries the post-translational modification N6-(pyridoxal phosphate)lysine.

Belongs to the TrpB family. Tetramer of two alpha and two beta chains. Requires pyridoxal 5'-phosphate as cofactor.

The catalysed reaction is (1S,2R)-1-C-(indol-3-yl)glycerol 3-phosphate + L-serine = D-glyceraldehyde 3-phosphate + L-tryptophan + H2O. The protein operates within amino-acid biosynthesis; L-tryptophan biosynthesis; L-tryptophan from chorismate: step 5/5. The beta subunit is responsible for the synthesis of L-tryptophan from indole and L-serine. This is Tryptophan synthase beta chain 1 (trpB1) from Aeropyrum pernix (strain ATCC 700893 / DSM 11879 / JCM 9820 / NBRC 100138 / K1).